A 190-amino-acid polypeptide reads, in one-letter code: Crossover junction endodeoxyribonuclease RuvC (190 aa).

Residues Asp8, Glu67, and Asp139 contribute to the active site. Residues Asp8, Glu67, and Asp139 each contribute to the Mg(2+) site.

This sequence belongs to the RuvC family. In terms of assembly, homodimer which binds Holliday junction (HJ) DNA. The HJ becomes 2-fold symmetrical on binding to RuvC with unstacked arms; it has a different conformation from HJ DNA in complex with RuvA. In the full resolvosome a probable DNA-RuvA(4)-RuvB(12)-RuvC(2) complex forms which resolves the HJ. The cofactor is Mg(2+).

It is found in the cytoplasm. It carries out the reaction Endonucleolytic cleavage at a junction such as a reciprocal single-stranded crossover between two homologous DNA duplexes (Holliday junction).. Functionally, the RuvA-RuvB-RuvC complex processes Holliday junction (HJ) DNA during genetic recombination and DNA repair. Endonuclease that resolves HJ intermediates. Cleaves cruciform DNA by making single-stranded nicks across the HJ at symmetrical positions within the homologous arms, yielding a 5'-phosphate and a 3'-hydroxyl group; requires a central core of homology in the junction. The consensus cleavage sequence is 5'-(A/T)TT(C/G)-3'. Cleavage occurs on the 3'-side of the TT dinucleotide at the point of strand exchange. HJ branch migration catalyzed by RuvA-RuvB allows RuvC to scan DNA until it finds its consensus sequence, where it cleaves and resolves the cruciform DNA. The chain is Crossover junction endodeoxyribonuclease RuvC from Pasteurella multocida (strain Pm70).